Reading from the N-terminus, the 220-residue chain is Charged multivesicular body protein 2a (220 aa).

Coiled coils occupy residues 12 to 53 (EEML…MAKQ) and 199 to 220 (PSAA…LRRD). The segment at 179 to 208 (LSNLPSTGGSLSVAGAKKGEPSAALADADA) is disordered. Positions 208–218 (ADLEERLNNLR) match the MIT-interacting motif motif.

This sequence belongs to the SNF7 family. As to quaternary structure, probable core component of the endosomal sorting required for transport complex III (ESCRT-III). ESCRT-III components are thought to multimerize to form a flat lattice on the perimeter membrane of the endosome.

Its subcellular location is the late endosome membrane. The protein localises to the cytoplasm. In terms of biological role, probable core component of the endosomal sorting required for transport complex III (ESCRT-III) which is involved in multivesicular bodies (MVBs) formation and sorting of endosomal cargo proteins into MVBs. MVBs contain intraluminal vesicles (ILVs) that are generated by invagination and scission from the limiting membrane of the endosome and mostly are delivered to lysosomes enabling degradation of membrane proteins, such as stimulated growth factor receptors, lysosomal enzymes and lipids. This chain is Charged multivesicular body protein 2a (chmp2a), found in Xenopus tropicalis (Western clawed frog).